A 560-amino-acid chain; its full sequence is DNA ligase B (560 aa).

Lys-124 serves as the catalytic N6-AMP-lysine intermediate.

The protein belongs to the NAD-dependent DNA ligase family. LigB subfamily.

The catalysed reaction is NAD(+) + (deoxyribonucleotide)n-3'-hydroxyl + 5'-phospho-(deoxyribonucleotide)m = (deoxyribonucleotide)n+m + AMP + beta-nicotinamide D-nucleotide.. Catalyzes the formation of phosphodiester linkages between 5'-phosphoryl and 3'-hydroxyl groups in double-stranded DNA using NAD as a coenzyme and as the energy source for the reaction. In Escherichia coli O139:H28 (strain E24377A / ETEC), this protein is DNA ligase B.